The sequence spans 689 residues: Armadillo-like helical domain-containing protein 3 (689 aa).

The helical transmembrane segment at 520-538 (IFQLALQVVNLFNMFITYG) threads the bilayer.

Belongs to the ARMH3 family.

The protein localises to the golgi apparatus membrane. It localises to the cytoplasm. May be involved in Golgi maintenance and protein secretion. The protein is Armadillo-like helical domain-containing protein 3 of Danio rerio (Zebrafish).